Reading from the N-terminus, the 304-residue chain is GTPase Era (304 aa).

Positions 7–178 (KCGVVAVLGA…KNALAALMPE (172 aa)) constitute an Era-type G domain. Residues 15-22 (GAPNAGKS) form a G1 region. GTP is bound at residue 15 to 22 (GAPNAGKS). The segment at 41 to 45 (QTTRA) is G2. The segment at 66–69 (DTPG) is G3. GTP is bound by residues 66-70 (DTPGI) and 128-131 (NKVD). The G4 stretch occupies residues 128-131 (NKVD). Residues 157 to 159 (VSA) form a G5 region. In terms of domain architecture, KH type-2 spans 209-286 (LHEELPYDSA…HLFLHVKVDE (78 aa)).

Belongs to the TRAFAC class TrmE-Era-EngA-EngB-Septin-like GTPase superfamily. Era GTPase family. As to quaternary structure, monomer.

The protein resides in the cytoplasm. Its subcellular location is the cell inner membrane. Functionally, an essential GTPase that binds both GDP and GTP, with rapid nucleotide exchange. Plays a role in 16S rRNA processing and 30S ribosomal subunit biogenesis and possibly also in cell cycle regulation and energy metabolism. This chain is GTPase Era, found in Erythrobacter litoralis (strain HTCC2594).